The primary structure comprises 335 residues: Proline racemase (335 aa).

C91 acts as the Proton acceptor in catalysis. The active-site Proton donor is the C255.

Belongs to the proline racemase family. In terms of assembly, homodimer.

The catalysed reaction is L-proline = D-proline. In terms of biological role, catalyzes the reversible interconversion of L- and D-proline. Plays an important role in the regulation of intra- and extracellular amino acid pools, allowing the bacterium to profit from host precursors and enzymatic pathways. Strong B-cell mitogen. The sequence is that of Proline racemase from Clostridioides difficile (strain 630) (Peptoclostridium difficile).